The primary structure comprises 97 residues: Co-chaperonin GroES (97 aa).

Belongs to the GroES chaperonin family. As to quaternary structure, heptamer of 7 subunits arranged in a ring. Interacts with the chaperonin GroEL.

The protein localises to the cytoplasm. Functionally, together with the chaperonin GroEL, plays an essential role in assisting protein folding. The GroEL-GroES system forms a nano-cage that allows encapsulation of the non-native substrate proteins and provides a physical environment optimized to promote and accelerate protein folding. GroES binds to the apical surface of the GroEL ring, thereby capping the opening of the GroEL channel. This is Co-chaperonin GroES from Pseudomonas putida (strain ATCC 700007 / DSM 6899 / JCM 31910 / BCRC 17059 / LMG 24140 / F1).